Consider the following 245-residue polypeptide: Ribonuclease 3 (245 aa).

The RNase III domain maps to 17–146 (FAKKMNELGF…FVGALYLDQG (130 aa)). Residue glutamate 59 participates in Mg(2+) binding. Aspartate 63 is an active-site residue. Residues aspartate 132 and glutamate 135 each contribute to the Mg(2+) site. Glutamate 135 is a catalytic residue. Residues 172 to 241 (DFKTQFQEYV…AESAYSKLKS (70 aa)) form the DRBM domain. A disordered region spans residues 217–245 (ATGQGKTKKESEQKAAESAYSKLKSNNNL).

This sequence belongs to the ribonuclease III family. Homodimer. Requires Mg(2+) as cofactor.

It is found in the cytoplasm. It carries out the reaction Endonucleolytic cleavage to 5'-phosphomonoester.. In terms of biological role, digests double-stranded RNA. Involved in the processing of primary rRNA transcript to yield the immediate precursors to the large and small rRNAs (23S and 16S). Processes some mRNAs, and tRNAs when they are encoded in the rRNA operon. Processes pre-crRNA and tracrRNA of type II CRISPR loci if present in the organism. This is Ribonuclease 3 from Staphylococcus haemolyticus (strain JCSC1435).